Reading from the N-terminus, the 240-residue chain is MVCQARFGVKNASRGHRMERPQTVKGKIMAVEFGDSQRSLSDTLTGMIASIRGNTITLRELMIEIGEQGFLLLCALLTLPFLIPVSIPGVSTVFGAAIILISLAITLNRMPWLPKRILDREIATEKLVPTLRKGAALVSKLDRYVRPRLNFLTEGALMNRFNGLMIMAGGVLLMFPLGLIPLSNTLPGIAILLLSLGIIQRDGLMVAGGYFFLVATTVYFAVLGYAAFAAGQGLSHFFVS.

3 consecutive transmembrane segments (helical) span residues 60-80 (ELMIEIGEQGFLLLCALLTLP), 81-101 (FLIPVSIPGVSTVFGAAIILI), and 203-223 (GLMVAGGYFFLVATTVYFAVL).

It to Synechocystis PCC 6803 slr1875.

It localises to the cell membrane. Functionally, required for nodule invasion. Mutations in this gene lead to sensitivity to alkaline conditions which prevents nodule invasion. In Rhizobium meliloti (strain 1021) (Ensifer meliloti), this protein is Protein ExoD (exoD).